The chain runs to 265 residues: Neuronal membrane glycoprotein M6-b (265 aa).

Residues 31–51 form a helical membrane-spanning segment; it reads GGVPYASLVATILCFSGVALF. N-linked (GlcNAc...) asparagine glycosylation occurs at asparagine 73. A run of 2 helical transmembrane segments spans residues 90–110 and 136–156; these read VIYGIASFFFLYVIILLAEGF and FVFLTYVLGVAWLGVFGFSAV. Residue asparagine 177 is glycosylated (N-linked (GlcNAc...) asparagine). Residues 224 to 244 form a helical membrane-spanning segment; sequence LFIVACAGAGATVIALLIYMM. Serine 257 is subject to Phosphoserine.

Belongs to the myelin proteolipid protein family. Interacts with SERT.

It localises to the membrane. The protein localises to the cell membrane. Functionally, may be involved in neural development. Involved in regulation of osteoblast function and bone formation. Involved in matrix vesicle release by osteoblasts; this function seems to involve maintenance of the actin cytoskeleton. May be involved in cellular trafficking of SERT and thereby in regulation of serotonin uptake. The chain is Neuronal membrane glycoprotein M6-b (GPM6B) from Pongo abelii (Sumatran orangutan).